Consider the following 251-residue polypeptide: Zinc import ATP-binding protein ZnuC (251 aa).

Positions 5 to 220 (VSLENVSVSF…PEFISMFGPR (216 aa)) constitute an ABC transporter domain. Residue 37-44 (GPNGAGKS) coordinates ATP.

This sequence belongs to the ABC transporter superfamily. Zinc importer (TC 3.A.1.15.5) family. As to quaternary structure, the complex is composed of two ATP-binding proteins (ZnuC), two transmembrane proteins (ZnuB) and a solute-binding protein (ZnuA).

The protein localises to the cell inner membrane. It carries out the reaction Zn(2+)(out) + ATP(in) + H2O(in) = Zn(2+)(in) + ADP(in) + phosphate(in) + H(+)(in). Its function is as follows. Part of the ABC transporter complex ZnuABC involved in zinc import. Responsible for energy coupling to the transport system. This Escherichia coli O157:H7 protein is Zinc import ATP-binding protein ZnuC.